The primary structure comprises 655 residues: D-xylonate dehydratase YjhG (655 aa).

The protein belongs to the IlvD/Edd family.

It carries out the reaction D-xylonate = 2-dehydro-3-deoxy-D-arabinonate + H2O. Its activity is regulated as follows. Activity is increased in the presence of Mn(+) and Mg(2+). Inhibited by thiol compounds. In terms of biological role, catalyzes the dehydration of D-xylonic acid to form 2-dehydro-3-deoxy-D-pentonate. In Escherichia coli (strain K12), this protein is D-xylonate dehydratase YjhG (yjhG).